Consider the following 822-residue polypeptide: Aminopeptidase O (822 aa).

Residue His-480 coordinates Zn(2+). The active-site Proton acceptor is the Glu-481. The Zn(2+) site is built by His-484 and Glu-503. The short motif at 692 to 702 (RRPGKRQRRKR) is the Nucleolar localization signal element.

It belongs to the peptidase M1 family. The cofactor is Zn(2+).

It localises to the nucleus. It is found in the nucleolus. In terms of biological role, aminopeptidase which catalyzes the hydrolysis of amino acid residues from the N-terminus of peptide or protein substrates. The chain is Aminopeptidase O (Aopep) from Rattus norvegicus (Rat).